The following is a 179-amino-acid chain: Adenine phosphoribosyltransferase (179 aa).

The protein belongs to the purine/pyrimidine phosphoribosyltransferase family. In terms of assembly, homodimer.

The protein localises to the cytoplasm. The enzyme catalyses AMP + diphosphate = 5-phospho-alpha-D-ribose 1-diphosphate + adenine. It functions in the pathway purine metabolism; AMP biosynthesis via salvage pathway; AMP from adenine: step 1/1. In terms of biological role, catalyzes a salvage reaction resulting in the formation of AMP, that is energically less costly than de novo synthesis. This Mycolicibacterium gilvum (strain PYR-GCK) (Mycobacterium gilvum (strain PYR-GCK)) protein is Adenine phosphoribosyltransferase.